The following is a 619-amino-acid chain: Alpha-L-arabinofuranosidase C (619 aa).

The N-terminal stretch at 1 to 37 (MINHNKTPNILAKVFKRTCGLVSTGAALAILSQAASA) is a signal peptide. Residues 38 to 136 (ACTYTIDSEW…TVTGAACNSA (99 aa)) enclose the CBM2 domain. Cysteines 39 and 133 form a disulfide. The CBM6 domain occupies 163–289 (LLQEAQAGFC…LPNIDSLSVV (127 aa)). Positions 300–319 (SVSSSSSVQSSSSSSSTPSQ) are disordered.

Belongs to the glycosyl hydrolase 62 family.

The protein resides in the secreted. It catalyses the reaction Hydrolysis of terminal non-reducing alpha-L-arabinofuranoside residues in alpha-L-arabinosides.. It functions in the pathway glycan metabolism; hemicellulose degradation. Functionally, xylanase C contributes to hydrolyze hemicellulose, the major component of plant cell-walls. The protein is Alpha-L-arabinofuranosidase C (xynC) of Cellvibrio japonicus (strain Ueda107) (Pseudomonas fluorescens subsp. cellulosa).